The sequence spans 518 residues: Ribonuclease Y (518 aa).

Residues 2 to 22 (GSIIISALLALVIGAVVGFFV) form a helical membrane-spanning segment. Residues 208–271 (TVSVVNLPND…ETARIALDKL (64 aa)) enclose the KH domain. An HD domain is found at 334 to 427 (VLKHSVEVAF…VAAADALSAA (94 aa)).

The protein belongs to the RNase Y family.

It localises to the cell membrane. In terms of biological role, endoribonuclease that initiates mRNA decay. The protein is Ribonuclease Y of Geobacillus thermodenitrificans (strain NG80-2).